The primary structure comprises 322 residues: Phosphatidylserine decarboxylase proenzyme (322 aa).

Catalysis depends on charge relay system; for autoendoproteolytic cleavage activity residues D90, H147, and S254. S254 (schiff-base intermediate with substrate; via pyruvic acid; for decarboxylase activity) is an active-site residue. A Pyruvic acid (Ser); by autocatalysis modification is found at S254. A disordered region spans residues 297-322 (PAPLPAEEIKAEHDASPLVDNKKDDT). The segment covering 303–322 (EEIKAEHDASPLVDNKKDDT) has biased composition (basic and acidic residues).

The protein belongs to the phosphatidylserine decarboxylase family. PSD-B subfamily. Prokaryotic type I sub-subfamily. Heterodimer of a large membrane-associated beta subunit and a small pyruvoyl-containing alpha subunit. Pyruvate is required as a cofactor. Is synthesized initially as an inactive proenzyme. Formation of the active enzyme involves a self-maturation process in which the active site pyruvoyl group is generated from an internal serine residue via an autocatalytic post-translational modification. Two non-identical subunits are generated from the proenzyme in this reaction, and the pyruvate is formed at the N-terminus of the alpha chain, which is derived from the carboxyl end of the proenzyme. The autoendoproteolytic cleavage occurs by a canonical serine protease mechanism, in which the side chain hydroxyl group of the serine supplies its oxygen atom to form the C-terminus of the beta chain, while the remainder of the serine residue undergoes an oxidative deamination to produce ammonia and the pyruvoyl prosthetic group on the alpha chain. During this reaction, the Ser that is part of the protease active site of the proenzyme becomes the pyruvoyl prosthetic group, which constitutes an essential element of the active site of the mature decarboxylase.

The protein resides in the cell membrane. The catalysed reaction is a 1,2-diacyl-sn-glycero-3-phospho-L-serine + H(+) = a 1,2-diacyl-sn-glycero-3-phosphoethanolamine + CO2. It participates in phospholipid metabolism; phosphatidylethanolamine biosynthesis; phosphatidylethanolamine from CDP-diacylglycerol: step 2/2. Functionally, catalyzes the formation of phosphatidylethanolamine (PtdEtn) from phosphatidylserine (PtdSer). This chain is Phosphatidylserine decarboxylase proenzyme, found in Salmonella typhi.